A 224-amino-acid polypeptide reads, in one-letter code: Type VII secretion system protein EsaE (224 aa).

In terms of assembly, interacts with EssD.

Functionally, component of the type VII secretion system (Ess). Plays a role in Esx protein secretion. Plays an essential role in the processing and secretion of EssD. This chain is Type VII secretion system protein EsaE, found in Staphylococcus aureus (strain USA300).